The primary structure comprises 248 residues: UPF0524 protein C3orf70 homolog (248 aa).

Residues 169–248 (KESDTPKLGH…EVIETMETTV (80 aa)) are disordered. The span at 200-227 (SCDEDTEEGAELSSEEDYSPESSWEPDE) shows a compositional bias: acidic residues.

The protein belongs to the UPF0524 family.

Functionally, may play a role in neuronal and neurobehavioral development. The protein is UPF0524 protein C3orf70 homolog of Mus musculus (Mouse).